The chain runs to 148 residues: Endoribonuclease YbeY (148 aa).

Residues His-102, His-106, and His-112 each coordinate Zn(2+).

This sequence belongs to the endoribonuclease YbeY family. It depends on Zn(2+) as a cofactor.

The protein localises to the cytoplasm. Single strand-specific metallo-endoribonuclease involved in late-stage 70S ribosome quality control and in maturation of the 3' terminus of the 16S rRNA. The polypeptide is Endoribonuclease YbeY (Phytoplasma mali (strain AT)).